The chain runs to 380 residues: Cytochrome b (380 aa).

Transmembrane regions (helical) follow at residues 33–53 (FGSL…FLAM), 77–98 (WLIR…YLHV), 113–133 (WNIG…GYVL), and 178–198 (FFAF…LHLL). Residues His83 and His97 each contribute to the heme b site. His182 and His196 together coordinate heme b. His201 contacts a ubiquinone. Helical transmembrane passes span 226–246 (YKDI…ALFS), 288–308 (LGGV…PILH), 320–340 (FSQF…WIGG), and 347–367 (FIII…LLIP).

It belongs to the cytochrome b family. The cytochrome bc1 complex contains 3 respiratory subunits (MT-CYB, CYC1 and UQCRFS1), 2 core proteins (UQCRC1 and UQCRC2) and probably 6 low-molecular weight proteins. Heme b serves as cofactor.

It localises to the mitochondrion inner membrane. Functionally, component of the ubiquinol-cytochrome c reductase complex (complex III or cytochrome b-c1 complex) that is part of the mitochondrial respiratory chain. The b-c1 complex mediates electron transfer from ubiquinol to cytochrome c. Contributes to the generation of a proton gradient across the mitochondrial membrane that is then used for ATP synthesis. This chain is Cytochrome b (mt-cyb), found in Arapaima gigas (Arapaima).